The chain runs to 859 residues: Leucine--tRNA ligase (859 aa).

Residues proline 42–histidine 52 carry the 'HIGH' region motif. The short motif at lysine 618–serine 622 is the 'KMSKS' region element. Lysine 621 is an ATP binding site.

It belongs to the class-I aminoacyl-tRNA synthetase family.

Its subcellular location is the cytoplasm. It catalyses the reaction tRNA(Leu) + L-leucine + ATP = L-leucyl-tRNA(Leu) + AMP + diphosphate. This Shewanella sp. (strain MR-4) protein is Leucine--tRNA ligase.